The following is an 876-amino-acid chain: Alanine--tRNA ligase (876 aa).

4 residues coordinate Zn(2+): H565, H569, C667, and H671.

This sequence belongs to the class-II aminoacyl-tRNA synthetase family. It depends on Zn(2+) as a cofactor.

Its subcellular location is the cytoplasm. The enzyme catalyses tRNA(Ala) + L-alanine + ATP = L-alanyl-tRNA(Ala) + AMP + diphosphate. Catalyzes the attachment of alanine to tRNA(Ala) in a two-step reaction: alanine is first activated by ATP to form Ala-AMP and then transferred to the acceptor end of tRNA(Ala). Also edits incorrectly charged Ser-tRNA(Ala) and Gly-tRNA(Ala) via its editing domain. The protein is Alanine--tRNA ligase of Staphylococcus aureus (strain MSSA476).